The following is a 188-amino-acid chain: Large ribosomal subunit protein eL18 (188 aa).

The disordered stretch occupies residues 151-188 (HFGPAPGVPHSHTKPLVRSKGRKFERARGRRKSCGYKK). 2 stretches are compositionally biased toward basic residues: residues 161-171 (SHTKPLVRSKG) and 178-188 (RGRRKSCGYKK).

It belongs to the eukaryotic ribosomal protein eL18 family.

It is found in the cytoplasm. This chain is Large ribosomal subunit protein eL18 (RpL18), found in Lysiphlebus testaceipes (Greenbugs aphid parastoid).